The chain runs to 1398 residues: DNA-directed RNA polymerase subunit beta' (1398 aa).

4 residues coordinate Zn(2+): cysteine 71, cysteine 73, cysteine 86, and cysteine 89. Mg(2+) is bound by residues aspartate 462, aspartate 464, and aspartate 466. Positions 810, 884, 891, and 894 each coordinate Zn(2+).

This sequence belongs to the RNA polymerase beta' chain family. The RNAP catalytic core consists of 2 alpha, 1 beta, 1 beta' and 1 omega subunit. When a sigma factor is associated with the core the holoenzyme is formed, which can initiate transcription. It depends on Mg(2+) as a cofactor. Zn(2+) is required as a cofactor.

It carries out the reaction RNA(n) + a ribonucleoside 5'-triphosphate = RNA(n+1) + diphosphate. Its function is as follows. DNA-dependent RNA polymerase catalyzes the transcription of DNA into RNA using the four ribonucleoside triphosphates as substrates. In Mesorhizobium japonicum (strain LMG 29417 / CECT 9101 / MAFF 303099) (Mesorhizobium loti (strain MAFF 303099)), this protein is DNA-directed RNA polymerase subunit beta'.